The chain runs to 207 residues: Nuclear transcription factor Y subunit beta (207 aa).

The tract at residues 1–52 is a domain; it reads MTMDGDSSTTDASQLGISADYIGGSHYVIQPHDDTEDSMNDHEDTNGSKESF. The tract at residues 27–52 is disordered; it reads YVIQPHDDTEDSMNDHEDTNGSKESF. A compositionally biased stretch (basic and acidic residues) spans 39-52; sequence MNDHEDTNGSKESF. The segment at 53-142 is b domain; sequence REQDIYLPIA…PLKLYLQKFR (90 aa). A DNA-binding region spans residues 59-65; the sequence is LPIANVA. The interval 86-97 is subunit association domain (SAD); it reads VQECVSEFISFI. A Glycyl lysine isopeptide (Lys-Gly) (interchain with G-Cter in ubiquitin) cross-link involves residue K140. The c domain stretch occupies residues 143 to 207; that stretch reads EAMKGEKGIG…ISGVQQIQFS (65 aa).

It belongs to the NFYB/HAP3 subunit family. As to quaternary structure, heterotrimeric transcription factor composed of three components, NF-YA, NF-YB and NF-YC. NF-YB and NF-YC must interact and dimerize for NF-YA association and DNA binding. Interacts with C1QBP. Monoubiquitination at Lys-140 plays an important role in transcriptional activation by allowing the deposition of histone H3 methylations as well as histone H2B monoubiquitination at 'Lys-121'.

It is found in the nucleus. In terms of biological role, component of the sequence-specific heterotrimeric transcription factor (NF-Y) which specifically recognizes a 5'-CCAAT-3' box motif found in the promoters of its target genes. NF-Y can function as both an activator and a repressor, depending on its interacting cofactors. The sequence is that of Nuclear transcription factor Y subunit beta (Nfyb) from Mus musculus (Mouse).